We begin with the raw amino-acid sequence, 566 residues long: Repressible alkaline phosphatase (566 aa).

The segment covering 1–11 (MMTHTLPSEQT) has biased composition (polar residues). The interval 1–27 (MMTHTLPSEQTRLVPGSDSSSRPKKRR) is disordered. At 1 to 33 (MMTHTLPSEQTRLVPGSDSSSRPKKRRISKRSK) the chain is on the cytoplasmic side. The helical transmembrane segment at 34 to 59 (IIVSTVVCIGLLLVLVQLAFPSSFAL) threads the bilayer. Mg(2+) is bound at residue Asp-75. Residue Asp-75 participates in Zn(2+) binding. Residue Ser-123 is the Phosphoserine intermediate of the active site. Ser-123 is modified (phosphoserine). Residues Asp-174 and Thr-176 each contribute to the Mg(2+) site. N-linked (GlcNAc...) asparagine glycosylation occurs at Asn-268. Glu-325 is a Mg(2+) binding site. Residues Asp-330, His-334, Asp-373, and His-374 each coordinate Zn(2+). N-linked (GlcNAc...) asparagine glycosylation is present at Asn-401. Zn(2+) is bound at residue His-484.

The protein belongs to the alkaline phosphatase family. It depends on Mg(2+) as a cofactor. The cofactor is Zn(2+).

The protein resides in the vacuole membrane. It is found in the cytoplasm. It carries out the reaction a phosphate monoester + H2O = an alcohol + phosphate. The catalysed reaction is (2E,6E)-farnesyl diphosphate + H2O = (2E,6E)-farnesol + diphosphate. The enzyme catalyses beta-D-fructose 2,6-bisphosphate + H2O = beta-D-fructose 2-phosphate + phosphate. In terms of biological role, phosphatase with broad substrate specificity. A truncated (soluble) version of the protein is responsible for the production of (E,E)-farnesol from (E,E)-farnesyl diphosphate. Acts as a fructose-2,6-bisphosphate 6-phosphatase. This chain is Repressible alkaline phosphatase (PHO8), found in Saccharomyces cerevisiae (strain ATCC 204508 / S288c) (Baker's yeast).